The following is a 767-amino-acid chain: Glucoamylase S1 (767 aa).

The N-terminal stretch at 1 to 21 (MQRPFLLAYLVLSLLFNSALG) is a signal peptide. Disordered regions lie at residues 29–83 (RGSS…ETTI) and 125–149 (TTTV…PTTP). Over residues 30 to 48 (GSSSSNITSSGPSSTPFSS) the composition is skewed to low complexity. N-linked (GlcNAc...) asparagine glycosylation is present at asparagine 35. The span at 49 to 66 (ATESFSTGTTVTPSSSKY) shows a compositional bias: polar residues. 2 stretches are compositionally biased toward low complexity: residues 71–83 (TETS…ETTI) and 131–149 (STSP…PTTP). N-linked (GlcNAc...) asparagine glycans are attached at residues asparagine 308, asparagine 322, asparagine 414, asparagine 423, and asparagine 434. Residues 348-691 (VSIERIFENI…ASTTLYQLIY (344 aa)) form a h subunit region. A substrate-binding site is contributed by tryptophan 455. The N-linked (GlcNAc...) asparagine glycan is linked to asparagine 513. Aspartate 518 acts as the Proton acceptor in catalysis. The active-site Proton donor is glutamate 521. N-linked (GlcNAc...) asparagine glycosylation is found at asparagine 546, asparagine 645, asparagine 650, asparagine 720, and asparagine 741. The segment at 692-767 (RHISEQHDLV…LKATWEQTGN (76 aa)) is y subunit.

Belongs to the glycosyl hydrolase 15 family.

The catalysed reaction is Hydrolysis of terminal (1-&gt;4)-linked alpha-D-glucose residues successively from non-reducing ends of the chains with release of beta-D-glucose.. The sequence is that of Glucoamylase S1 (STA1) from Saccharomyces cerevisiae (Baker's yeast).